The primary structure comprises 262 residues: Phosphatidylglycerol--prolipoprotein diacylglyceryl transferase (262 aa).

4 consecutive transmembrane segments (helical) span residues 17–37 (LAIH…YALG), 57–77 (LIFY…VLFY), 95–115 (GGMS…LFAH), and 119–139 (LGFF…LAAG). Residue arginine 140 coordinates a 1,2-diacyl-sn-glycero-3-phospho-(1'-sn-glycerol). A run of 3 helical transmembrane segments spans residues 173-193 (PSQL…LWWY), 200-220 (AGQV…LVEF), and 227-247 (FLGL…PMVL).

It belongs to the Lgt family.

It localises to the cell inner membrane. It carries out the reaction L-cysteinyl-[prolipoprotein] + a 1,2-diacyl-sn-glycero-3-phospho-(1'-sn-glycerol) = an S-1,2-diacyl-sn-glyceryl-L-cysteinyl-[prolipoprotein] + sn-glycerol 1-phosphate + H(+). It functions in the pathway protein modification; lipoprotein biosynthesis (diacylglyceryl transfer). In terms of biological role, catalyzes the transfer of the diacylglyceryl group from phosphatidylglycerol to the sulfhydryl group of the N-terminal cysteine of a prolipoprotein, the first step in the formation of mature lipoproteins. In Bordetella parapertussis (strain 12822 / ATCC BAA-587 / NCTC 13253), this protein is Phosphatidylglycerol--prolipoprotein diacylglyceryl transferase.